The chain runs to 37 residues: Photosystem II reaction center protein M (37 aa).

A helical membrane pass occupies residues 5-25 (ILAFIATALFILVPTAFLLII).

Belongs to the PsbM family. As to quaternary structure, PSII is composed of 1 copy each of membrane proteins PsbA, PsbB, PsbC, PsbD, PsbE, PsbF, PsbH, PsbI, PsbJ, PsbK, PsbL, PsbM, PsbT, PsbX, PsbY, PsbZ, Psb30/Ycf12, at least 3 peripheral proteins of the oxygen-evolving complex and a large number of cofactors. It forms dimeric complexes.

The protein resides in the plastid. Its subcellular location is the chloroplast thylakoid membrane. In terms of biological role, one of the components of the core complex of photosystem II (PSII). PSII is a light-driven water:plastoquinone oxidoreductase that uses light energy to abstract electrons from H(2)O, generating O(2) and a proton gradient subsequently used for ATP formation. It consists of a core antenna complex that captures photons, and an electron transfer chain that converts photonic excitation into a charge separation. This subunit is found at the monomer-monomer interface. This chain is Photosystem II reaction center protein M, found in Pelargonium hortorum (Common geranium).